An 85-amino-acid polypeptide reads, in one-letter code: Large ribosomal subunit protein bL27 (85 aa).

Positions Met1–Thr10 are enriched in gly residues. Residues Met1–Met20 form a disordered region.

The protein belongs to the bacterial ribosomal protein bL27 family.

The sequence is that of Large ribosomal subunit protein bL27 from Acidovorax ebreus (strain TPSY) (Diaphorobacter sp. (strain TPSY)).